We begin with the raw amino-acid sequence, 231 residues long: 5'-methylthioadenosine/S-adenosylhomocysteine nucleosidase (231 aa).

The active-site Proton acceptor is Glu-12. Substrate contacts are provided by residues Gly-78, Met-153, and 174–175 (ME). Asp-198 serves as the catalytic Proton donor.

This sequence belongs to the PNP/UDP phosphorylase family. MtnN subfamily.

The catalysed reaction is S-adenosyl-L-homocysteine + H2O = S-(5-deoxy-D-ribos-5-yl)-L-homocysteine + adenine. The enzyme catalyses S-methyl-5'-thioadenosine + H2O = 5-(methylsulfanyl)-D-ribose + adenine. It carries out the reaction 5'-deoxyadenosine + H2O = 5-deoxy-D-ribose + adenine. It participates in amino-acid biosynthesis; L-methionine biosynthesis via salvage pathway; S-methyl-5-thio-alpha-D-ribose 1-phosphate from S-methyl-5'-thioadenosine (hydrolase route): step 1/2. Catalyzes the irreversible cleavage of the glycosidic bond in both 5'-methylthioadenosine (MTA) and S-adenosylhomocysteine (SAH/AdoHcy) to adenine and the corresponding thioribose, 5'-methylthioribose and S-ribosylhomocysteine, respectively. Also cleaves 5'-deoxyadenosine, a toxic by-product of radical S-adenosylmethionine (SAM) enzymes, into 5-deoxyribose and adenine. The polypeptide is 5'-methylthioadenosine/S-adenosylhomocysteine nucleosidase (Bacillus velezensis (strain DSM 23117 / BGSC 10A6 / LMG 26770 / FZB42) (Bacillus amyloliquefaciens subsp. plantarum)).